Reading from the N-terminus, the 445-residue chain is Phospho-alpha-glucosidase PagL (445 aa).

Y4–D71 contacts NAD(+). 2 residues coordinate substrate: R94 and N148. Mn(2+) is bound at residue C171. D172 acts as the Proton donor in catalysis. H201 contributes to the Mn(2+) binding site. Y264 serves as the catalytic Proton acceptor. A substrate-binding site is contributed by R284.

Belongs to the glycosyl hydrolase 4 family. As to quaternary structure, homotetramer. NAD(+) is required as a cofactor. Mn(2+) serves as cofactor.

Its function is as follows. Phospho-alpha-glucosidase that catalyzes the hydrolysis of p-nitrophenyl-alpha-D-glucopyranoside 6-phosphate, but is not able to cleave 'natural' phospho-alpha-glucosides produced via the phosphoenolpyruvate-dependent sugar phosphotransferase system (PEP-PTS). The chain is Phospho-alpha-glucosidase PagL (pagL) from Clostridium acetobutylicum (strain ATCC 824 / DSM 792 / JCM 1419 / IAM 19013 / LMG 5710 / NBRC 13948 / NRRL B-527 / VKM B-1787 / 2291 / W).